The sequence spans 119 residues: MGKAAAVVLVTLVALLGLAQADLTPKVQVYSRFPASAGTKNVLNCFAAGFHPPKISITLMKDGVPMEGAQYSDMSFNDDWTFQRLVHADFTPSSGSTYACKVEHETLKEPQVYKWDPEF.

The signal sequence occupies residues 1 to 21 (MGKAAAVVLVTLVALLGLAQA). One can recognise an Ig-like C1-type domain in the interval 25–113 (PKVQVYSRFP…HETLKEPQVY (89 aa)). The cysteines at positions 45 and 100 are disulfide-linked.

The protein belongs to the beta-2-microglobulin family. In terms of assembly, heterodimer of an alpha chain and a beta chain. Beta-2-microglobulin is the beta-chain of major histocompatibility complex class I molecules.

The protein resides in the secreted. In terms of biological role, component of the class I major histocompatibility complex (MHC). Involved in the presentation of peptide antigens to the immune system. The polypeptide is Beta-2-microglobulin (B2M) (Gallus gallus (Chicken)).